A 190-amino-acid polypeptide reads, in one-letter code: 6,7-dimethyl-8-ribityllumazine synthase (190 aa).

5-amino-6-(D-ribitylamino)uracil is bound by residues Phe23, 61 to 63 (SFE), and 85 to 87 (AVI). 90 to 91 (QT) is a (2S)-2-hydroxy-3-oxobutyl phosphate binding site. Residue His93 is the Proton donor of the active site. Phe118 provides a ligand contact to 5-amino-6-(D-ribitylamino)uracil. Arg132 lines the (2S)-2-hydroxy-3-oxobutyl phosphate pocket.

It belongs to the DMRL synthase family.

It carries out the reaction (2S)-2-hydroxy-3-oxobutyl phosphate + 5-amino-6-(D-ribitylamino)uracil = 6,7-dimethyl-8-(1-D-ribityl)lumazine + phosphate + 2 H2O + H(+). The protein operates within cofactor biosynthesis; riboflavin biosynthesis; riboflavin from 2-hydroxy-3-oxobutyl phosphate and 5-amino-6-(D-ribitylamino)uracil: step 1/2. Catalyzes the formation of 6,7-dimethyl-8-ribityllumazine by condensation of 5-amino-6-(D-ribitylamino)uracil with 3,4-dihydroxy-2-butanone 4-phosphate. This is the penultimate step in the biosynthesis of riboflavin. The polypeptide is 6,7-dimethyl-8-ribityllumazine synthase (Trichormus variabilis (strain ATCC 29413 / PCC 7937) (Anabaena variabilis)).